A 373-amino-acid chain; its full sequence is MTTAGIDLQLGFETALQNLGLSPGAAHALWVPLPMLLMVIAATLGVMVMTWLERKISAAAQQRIGPNMAGPQGVLIPIADGIKLLTKEDVLPSLADPVLFTLGPILVFLPVFLCYLVVPFGQNLLISNIAIGVFFLIATSSVQPIGLLMSGYGSNNKYSLLGGLRAAAQSISYELPLALSVLAVVLMSNGLDTVGIVEQQSGLGILSWNVWRQPIGFVIFLISALAETERIPFDLPEAEEELVAGYQTEYSGMKFALFYLGSYANLLLASLIAAVLYLGGWSFVVPVETIAAWLGIPLDNPFLQIGAAVLGILMTMVKAFIFVFLAILLRWTLPRVRIDQLLDLGWKFLLPVSFVNLLLTAALKLAFPTFFGG.

A run of 9 helical transmembrane segments spans residues 29–49 (LWVPLPMLLMVIAATLGVMVM), 64–84 (IGPNMAGPQGVLIPIADGIKL), 98–118 (VLFTLGPILVFLPVFLCYLVV), 129–149 (IAIGVFFLIATSSVQPIGLLM), 177–197 (LALSVLAVVLMSNGLDTVGIV), 202–222 (GLGILSWNVWRQPIGFVIFLI), 267–287 (LLASLIAAVLYLGGWSFVVPV), 309–329 (VLGILMTMVKAFIFVFLAILL), and 348–368 (FLLPVSFVNLLLTAALKLAFP).

Belongs to the complex I subunit 1 family. NDH-1 is composed of at least 11 different subunits.

The protein resides in the cellular thylakoid membrane. The catalysed reaction is a plastoquinone + NADH + (n+1) H(+)(in) = a plastoquinol + NAD(+) + n H(+)(out). It carries out the reaction a plastoquinone + NADPH + (n+1) H(+)(in) = a plastoquinol + NADP(+) + n H(+)(out). In terms of biological role, NDH-1 shuttles electrons from an unknown electron donor, via FMN and iron-sulfur (Fe-S) centers, to quinones in the respiratory and/or the photosynthetic chain. The immediate electron acceptor for the enzyme in this species is believed to be plastoquinone. Couples the redox reaction to proton translocation, and thus conserves the redox energy in a proton gradient. This Synechococcus sp. (strain JA-3-3Ab) (Cyanobacteria bacterium Yellowstone A-Prime) protein is NAD(P)H-quinone oxidoreductase subunit 1.